The primary structure comprises 121 residues: Small ribosomal subunit protein uS13 (121 aa).

The tract at residues 91–121 (HRRGLPVRGQNSKNNARTRKGPRRTVANKKK) is disordered. The span at 106–121 (ARTRKGPRRTVANKKK) shows a compositional bias: basic residues.

This sequence belongs to the universal ribosomal protein uS13 family. Part of the 30S ribosomal subunit. Forms a loose heterodimer with protein S19. Forms two bridges to the 50S subunit in the 70S ribosome.

Its function is as follows. Located at the top of the head of the 30S subunit, it contacts several helices of the 16S rRNA. In the 70S ribosome it contacts the 23S rRNA (bridge B1a) and protein L5 of the 50S subunit (bridge B1b), connecting the 2 subunits; these bridges are implicated in subunit movement. Contacts the tRNAs in the A and P-sites. In Bacillus cereus (strain ZK / E33L), this protein is Small ribosomal subunit protein uS13.